Consider the following 898-residue polypeptide: Magnesium-transporting ATPase, P-type 1 (898 aa).

At 1 to 94 (MFKEIFTRLI…QPSPWWVHLW (94 aa)) the chain is on the cytoplasmic side. A helical membrane pass occupies residues 95–115 (VCYRNPFNILLTILGAISYAT). Residue Glu116 is a topological domain, extracellular. The chain crosses the membrane as a helical span at residues 117-137 (DLFAAGVIALMVAISTLLNFI). Residues 138 to 287 (QEARSTKAAD…PNAFQQGISR (150 aa)) are Cytoplasmic-facing. Residues 288–308 (VSMLLIRFMLVMAPVVLLING) traverse the membrane as a helical segment. Over 309–317 (YTKGDWWEA) the chain is Extracellular. The chain crosses the membrane as a helical span at residues 318-335 (ALFALSVAVGLTPEMLPM). Mg(2+) is bound at residue Glu331. The Cytoplasmic segment spans residues 336–695 (IVTSTLARGA…IEGRRTFANM (360 aa)). Asp373 acts as the 4-aspartylphosphate intermediate in catalysis. Mg(2+) contacts are provided by Asp641, Asp645, and Asn709. The helical transmembrane segment at 696-715 (LKYIKMTASSNFGNVFSVLV) threads the bilayer. At 716 to 724 (ASAFLPFLP) the chain is on the extracellular side. A helical transmembrane segment spans residues 725 to 744 (MLPLHLLIQNLLYDVSQVAI). Asn734 and Asp738 together coordinate Mg(2+). The Cytoplasmic segment spans residues 745–766 (PFDNVDDEQIQKPQRWNPADLG). The chain crosses the membrane as a helical span at residues 767–790 (RFMIFFGPISSIFDILTFCLMWWV). Over 791 to 799 (FHANTPETQ) the chain is Extracellular. A helical membrane pass occupies residues 800 to 818 (TLFQSGWFVVGLLSQTLIV). The Cytoplasmic portion of the chain corresponds to 819 to 831 (HMIRTRRVPFIQS). The chain crosses the membrane as a helical span at residues 832–851 (CASWPLMIMTVIVMIVGIAL). Topologically, residues 852–866 (PFSPLASYLQLQALP) are extracellular. The chain crosses the membrane as a helical span at residues 867 to 886 (LSYFPWLVAILAGYMTLTQL). The Cytoplasmic segment spans residues 887–898 (VKGFYSRRYGWQ).

The protein belongs to the cation transport ATPase (P-type) (TC 3.A.3) family. Type IIIB subfamily.

Its subcellular location is the cell inner membrane. The enzyme catalyses Mg(2+)(out) + ATP + H2O = Mg(2+)(in) + ADP + phosphate + H(+). Functionally, mediates magnesium influx to the cytosol. The protein is Magnesium-transporting ATPase, P-type 1 (mgtA) of Escherichia coli O157:H7.